We begin with the raw amino-acid sequence, 303 residues long: Dihydroorotate dehydrogenase B (NAD(+)), catalytic subunit (303 aa).

Residues S21 and 45 to 46 (KG) contribute to the FMN site. Residues K45 and 69-73 (NCIGL) each bind substrate. FMN contacts are provided by N98 and N126. N126 is a binding site for substrate. C129 acts as the Nucleophile in catalysis. FMN contacts are provided by K165 and V191. Substrate is bound at residue 192–193 (NT). Residues G217 and 243-244 (GG) contribute to the FMN site.

The protein belongs to the dihydroorotate dehydrogenase family. Type 1 subfamily. As to quaternary structure, heterotetramer of 2 PyrK and 2 PyrD type B subunits. It depends on FMN as a cofactor.

The protein localises to the cytoplasm. The enzyme catalyses (S)-dihydroorotate + NAD(+) = orotate + NADH + H(+). It participates in pyrimidine metabolism; UMP biosynthesis via de novo pathway; orotate from (S)-dihydroorotate (NAD(+) route): step 1/1. Its function is as follows. Catalyzes the conversion of dihydroorotate to orotate with NAD(+) as electron acceptor. This chain is Dihydroorotate dehydrogenase B (NAD(+)), catalytic subunit (pyrD), found in Brachyspira hyodysenteriae (strain ATCC 49526 / WA1).